The sequence spans 616 residues: Chaperone protein HscA (616 aa).

Belongs to the heat shock protein 70 family.

Chaperone involved in the maturation of iron-sulfur cluster-containing proteins. Has a low intrinsic ATPase activity which is markedly stimulated by HscB. Involved in the maturation of IscU. In Salmonella enteritidis PT4 (strain P125109), this protein is Chaperone protein HscA.